Reading from the N-terminus, the 305-residue chain is Peroxisome biogenesis factor 2 (305 aa).

The Peroxisomal matrix segment spans residues 1–15 (MASRKENAKSANRVL). The helical transmembrane segment at 16-42 (RISQLDALELNKALEQLVWSQFTQCFH) threads the bilayer. The Cytoplasmic portion of the chain corresponds to 43–48 (GFKPGL). A helical transmembrane segment spans residues 49 to 74 (LARFEPEVKACLWVFLWRFTIYSKNA). The Peroxisomal matrix portion of the chain corresponds to 75–98 (TVGQSVLNIKYKNDFSPNLRYQPP). Lys84 is subject to N6-acetyllysine. A helical transmembrane segment spans residues 99–125 (SKNQKIWYAVCTIGGRWLEERCYDLFR). Over 126–133 (NHHLASFG) the chain is Cytoplasmic. The helical transmembrane segment at 134 to 160 (KVKQCVNFVIGLLKLGGLINFLIFLQR) threads the bilayer. Topologically, residues 161 to 187 (GKFATLTERLLGIHSVFCKPQNICEVG) are peroxisomal matrix. A helical transmembrane segment spans residues 188–211 (FEYMNRELLWHGFAEFLIFLLPLI). The Cytoplasmic portion of the chain corresponds to 212–305 (NVQKLKAKLS…GIEMSEVNAL (94 aa)). 8 residues coordinate Zn(2+): Cys244, Cys247, Cys259, His261, Cys264, Cys267, Cys280, and Cys283. The segment at 244–284 (CALCGEWPTMPHTIGCEHIFCYFCAKSSFLFDVYFTCPKCG) adopts an RING-type zinc-finger fold.

It belongs to the pex2/pex10/pex12 family. As to quaternary structure, component of the PEX2-PEX10-PEX12 retrotranslocation channel, composed of PEX2, PEX10 and PEX12. Forms intramolecular and intermolecular disulfide bonds in response to reactive oxygen species (ROS), promoting higher stability.

The protein localises to the peroxisome membrane. The enzyme catalyses [E2 ubiquitin-conjugating enzyme]-S-ubiquitinyl-L-cysteine + [acceptor protein]-L-cysteine = [E2 ubiquitin-conjugating enzyme]-L-cysteine + [acceptor protein]-S-ubiquitinyl-L-cysteine.. It catalyses the reaction S-ubiquitinyl-[E2 ubiquitin-conjugating enzyme]-L-cysteine + [acceptor protein]-L-lysine = [E2 ubiquitin-conjugating enzyme]-L-cysteine + N(6)-ubiquitinyl-[acceptor protein]-L-lysine.. Its pathway is protein modification; protein ubiquitination. Its function is as follows. E3 ubiquitin-protein ligase component of a retrotranslocation channel required for peroxisome organization by mediating export of the PEX5 receptor from peroxisomes to the cytosol, thereby promoting PEX5 recycling. The retrotranslocation channel is composed of PEX2, PEX10 and PEX12; each subunit contributing transmembrane segments that coassemble into an open channel that specifically allows the passage of PEX5 through the peroxisomal membrane. PEX2 also regulates peroxisome organization by acting as a E3 ubiquitin-protein ligase. PEX2 ubiquitinates PEX5 during its passage through the retrotranslocation channel: catalyzes monoubiquitination of PEX5 at 'Cys-11', a modification that acts as a signal for PEX5 extraction into the cytosol. Required for pexophagy in response to starvation by mediating ubiquitination of peroxisomal proteins, such as PEX5 and ABCD3/PMP70. Also involved in the response to reactive oxygen species (ROS) by mediating 'Lys-48'-linked polyubiquitination and subsequent degradation of PNPLA2/ATGL, thereby regulating lipolysis. This Homo sapiens (Human) protein is Peroxisome biogenesis factor 2.